The chain runs to 217 residues: UPF0711 protein C18orf21 homolog (217 aa).

Position 126 is a phosphoserine (Ser126). A phosphothreonine mark is found at Thr130 and Thr139. A disordered region spans residues 131–190 (AANKASPKTPKRTAPGSANLGQSTNGSKGKSPSLTIRTPTSGQSTPICSSRNGSKRKKHF). Residues 149-182 (NLGQSTNGSKGKSPSLTIRTPTSGQSTPICSSRN) show a composition bias toward polar residues.

This sequence belongs to the UPF0711 family.

The protein is UPF0711 protein C18orf21 homolog of Mus musculus (Mouse).